The following is a 213-amino-acid chain: Uridine kinase (213 aa).

Residue 15-22 (GGSGSGKT) participates in ATP binding.

This sequence belongs to the uridine kinase family.

The protein localises to the cytoplasm. It catalyses the reaction uridine + ATP = UMP + ADP + H(+). The catalysed reaction is cytidine + ATP = CMP + ADP + H(+). It functions in the pathway pyrimidine metabolism; CTP biosynthesis via salvage pathway; CTP from cytidine: step 1/3. Its pathway is pyrimidine metabolism; UMP biosynthesis via salvage pathway; UMP from uridine: step 1/1. The polypeptide is Uridine kinase (Ligilactobacillus salivarius (strain UCC118) (Lactobacillus salivarius)).